We begin with the raw amino-acid sequence, 460 residues long: MNTSAPPAVSPNITVLAPGKGPWQVAFIGITTGLLSLATVTGNLLVLISFKVNTELKTVNNYFLLSLACADLIIGTFSMNLYTTYLLMGHWALGTLACDLWLALDYVASNASVMNLLLISFDRYFSVTRPLSYRAKRTPRRAALMIGLAWLVSFVLWAPAILFWQYLVGERTVLAGQCYIQFLSQPIITFGTAMAAFYLPVTVMCTLYWRIYRETESRARELAALQGSETPGKGGGSSSSSERSQPGAEGSPGTPPGRCCRCCRAPRLLQAYSWKEEEEEDEGSMESLTSSEGEEPGSEVVIKMPMVDPEAQAPTKQPPRSSPNTVKRPTKKGRDRAGKGQKPRGKEQLAKRKTFSLVKEKKAARTLSAILLAFILTWTPYNIMVLVSTFCKDCVPETLWELGYWLCYVNSTINPMCYALCNKAFRDTFRLLLLCRWDKRRWRKIPKRPGSVHRTPSRQC.

At 1-22 (MNTSAPPAVSPNITVLAPGKGP) the chain is on the extracellular side. N-linked (GlcNAc...) asparagine glycans are attached at residues Asn-2 and Asn-12. Residues 23-48 (WQVAFIGITTGLLSLATVTGNLLVLI) form a helical membrane-spanning segment. Residues 49–62 (SFKVNTELKTVNNY) lie on the Cytoplasmic side of the membrane. Residues 63–84 (FLLSLACADLIIGTFSMNLYTT) traverse the membrane as a helical segment. At 85–95 (YLLMGHWALGT) the chain is on the extracellular side. Residues 96–121 (LACDLWLALDYVASNASVMNLLLISF) traverse the membrane as a helical segment. A disulfide bond links Cys-98 and Cys-178. The Cytoplasmic portion of the chain corresponds to 122–142 (DRYFSVTRPLSYRAKRTPRRA). The helical transmembrane segment at 143–164 (ALMIGLAWLVSFVLWAPAILFW) threads the bilayer. At 165-185 (QYLVGERTVLAGQCYIQFLSQ) the chain is on the extracellular side. Residues 186–209 (PIITFGTAMAAFYLPVTVMCTLYW) form a helical membrane-spanning segment. The Cytoplasmic segment spans residues 210-366 (RIYRETESRA…LVKEKKAART (157 aa)). Disordered stretches follow at residues 225–256 (LQGSETPGKGGGSSSSSERSQPGAEGSPGTPP), 274–297 (WKEEEEEDEGSMESLTSSEGEEPG), and 310–351 (EAQA…QLAK). The residue at position 230 (Thr-230) is a Phosphothreonine. A compositionally biased stretch (low complexity) spans 238–247 (SSSSERSQPG). The span at 328–343 (RPTKKGRDRAGKGQKP) shows a compositional bias: basic residues. A helical membrane pass occupies residues 367 to 390 (LSAILLAFILTWTPYNIMVLVSTF). Residues 391–397 (CKDCVPE) are Extracellular-facing. Residues 398 to 420 (TLWELGYWLCYVNSTINPMCYAL) form a helical membrane-spanning segment. At 421 to 460 (CNKAFRDTFRLLLLCRWDKRRWRKIPKRPGSVHRTPSRQC) the chain is on the cytoplasmic side. Thr-428 bears the Phosphothreonine mark. At Ser-451 the chain carries Phosphoserine. Position 455 is a phosphothreonine (Thr-455). The residue at position 457 (Ser-457) is a Phosphoserine.

This sequence belongs to the G-protein coupled receptor 1 family. Muscarinic acetylcholine receptor subfamily. CHRM1 sub-subfamily. As to quaternary structure, interacts with GPRASP2. Interacts with TMEM147.

Its subcellular location is the cell membrane. It localises to the postsynaptic cell membrane. Functionally, the muscarinic acetylcholine receptor mediates various cellular responses, including inhibition of adenylate cyclase, breakdown of phosphoinositides and modulation of potassium channels through the action of G proteins. Primary transducing effect is Pi turnover. This chain is Muscarinic acetylcholine receptor M1 (CHRM1), found in Pongo abelii (Sumatran orangutan).